Consider the following 246-residue polypeptide: E3 ubiquitin-protein ligase LubX (246 aa).

U-box domains lie at Thr36 to Tyr109 and Glu131 to Glu204.

In terms of assembly, interacts with host CLK1. In terms of processing, ubiquitinated in the presence of host E1 ubiquitin-activating enzyme, E2 ubiquitin-conjugating enzyme (UBE2D1 or UBE2D3) and ubiquitin.

Its subcellular location is the secreted. It is found in the host cell. The catalysed reaction is S-ubiquitinyl-[E2 ubiquitin-conjugating enzyme]-L-cysteine + [acceptor protein]-L-lysine = [E2 ubiquitin-conjugating enzyme]-L-cysteine + N(6)-ubiquitinyl-[acceptor protein]-L-lysine.. Its function is as follows. Effector proteins function to alter host cell physiology and promote bacterial survival in host tissues. This protein is an E3 ubiquitin ligase that interferes with host's ubiquitination pathway. Acts in conjunction with host E2 ubiquitin-conjugating enzymes UBE2D1 (UBCH5A) or UBE2D3 (UBCH5C), and mediates polyubiquitination of host kinase CLK1. In Legionella pneumophila subsp. pneumophila (strain Philadelphia 1 / ATCC 33152 / DSM 7513), this protein is E3 ubiquitin-protein ligase LubX (lubX).